We begin with the raw amino-acid sequence, 380 residues long: Cytochrome b (380 aa).

Transmembrane regions (helical) follow at residues 33-53 (FGSLLGACLIIQITTGLFLAM), 77-98 (WMIRHLHANGASMFFICLFLHI), 113-133 (WNIGIILLFTTMMTAFMGYVL), and 178-198 (FFTLHFMLPFIITALTTLHLL). Residues H83 and H97 each contribute to the heme b site. 2 residues coordinate heme b: H182 and H196. H201 contributes to the a ubiquinone binding site. Helical transmembrane passes span 226–246 (IKDILGLLLFLLALMTLTLLS), 288–308 (LGGVMALMLSILILTTIPALH), 320–340 (LSQFLYWLLIADLLILTWIGG), and 347–367 (FITISQVASTLYFTTILLLMP).

Belongs to the cytochrome b family. The cytochrome bc1 complex contains 11 subunits: 3 respiratory subunits (MT-CYB, CYC1 and UQCRFS1), 2 core proteins (UQCRC1 and UQCRC2) and 6 low-molecular weight proteins (UQCRH/QCR6, UQCRB/QCR7, UQCRQ/QCR8, UQCR10/QCR9, UQCR11/QCR10 and a cleavage product of UQCRFS1). This cytochrome bc1 complex then forms a dimer. The cofactor is heme b.

Its subcellular location is the mitochondrion inner membrane. In terms of biological role, component of the ubiquinol-cytochrome c reductase complex (complex III or cytochrome b-c1 complex) that is part of the mitochondrial respiratory chain. The b-c1 complex mediates electron transfer from ubiquinol to cytochrome c. Contributes to the generation of a proton gradient across the mitochondrial membrane that is then used for ATP synthesis. In Pongo abelii (Sumatran orangutan), this protein is Cytochrome b (MT-CYB).